The primary structure comprises 141 residues: Large ribosomal subunit protein uL11 (141 aa).

Belongs to the universal ribosomal protein uL11 family. Part of the ribosomal stalk of the 50S ribosomal subunit. Interacts with L10 and the large rRNA to form the base of the stalk. L10 forms an elongated spine to which L12 dimers bind in a sequential fashion forming a multimeric L10(L12)X complex. Post-translationally, one or more lysine residues are methylated.

Its function is as follows. Forms part of the ribosomal stalk which helps the ribosome interact with GTP-bound translation factors. The chain is Large ribosomal subunit protein uL11 from Natranaerobius thermophilus (strain ATCC BAA-1301 / DSM 18059 / JW/NM-WN-LF).